Here is a 148-residue protein sequence, read N- to C-terminus: Large ribosomal subunit protein uL15 (148 aa).

Over residues 1–30 (MPSRLRKTRKLRGHVSHGHGRIGKHRKHPG) the composition is skewed to basic residues. The segment at 1 to 38 (MPSRLRKTRKLRGHVSHGHGRIGKHRKHPGGRGNAGGL) is disordered. H39 is subject to (3S)-3-hydroxyhistidine. K47 and K55 each carry N6-acetyllysine. At S68 the chain carries Phosphoserine. K110 carries the post-translational modification N6-acetyllysine.

The protein belongs to the universal ribosomal protein uL15 family. In terms of processing, hydroxylated on His-39 by MINA.

The sequence is that of Large ribosomal subunit protein uL15 (RPL27A) from Pan troglodytes (Chimpanzee).